A 437-amino-acid chain; its full sequence is Sulfite reductase, dissimilatory-type subunit alpha (437 aa).

C177, C183, C221, C225, C284, C303, C306, and C309 together coordinate [4Fe-4S] cluster. The region spanning 294–322 (SKLSIDNKECVRCMHCINTMPRALHIGDE) is the 4Fe-4S ferredoxin-type domain.

As to quaternary structure, heterohexamer of two alpha, two beta and two gamma subunits.

In terms of biological role, part of the complex that catalyzes the reduction of sulfite to sulfide. The alpha and beta subunits may have arisen by gene duplication. They both bind 2 iron-sulfur clusters, but the alpha subunit seems to be catalytically inactive, due to substitutions along the putative substrate access channel, and because it binds sirohydrochlorin (the dematallated form of siroheme) instead of siroheme. In Nitratidesulfovibrio vulgaris (strain ATCC 29579 / DSM 644 / CCUG 34227 / NCIMB 8303 / VKM B-1760 / Hildenborough) (Desulfovibrio vulgaris), this protein is Sulfite reductase, dissimilatory-type subunit alpha (dsvA).